The chain runs to 434 residues: Fc receptor-like protein 6 (434 aa).

The signal sequence occupies residues 1–19 (MLLWTAVLLFVPCVGKTVW). 3 consecutive Ig-like C2-type domains span residues 20–95 (LYLQ…QTFT), 111–197 (PPVL…PQLE), and 207–293 (PVLT…KKLS). Over 20–307 (LYLQAWPNPV…QVLFTPASNW (288 aa)) the chain is Extracellular. 3 cysteine pairs are disulfide-bonded: Cys-39–Cys-83, Cys-132–Cys-180, and Cys-228–Cys-276. N-linked (GlcNAc...) asparagine glycosylation occurs at Asn-65. Residue Asn-273 is glycosylated (N-linked (GlcNAc...) asparagine). Residues 308-328 (LVPWLPASLLGLMVIAAALLV) traverse the membrane as a helical segment. The Cytoplasmic portion of the chain corresponds to 329 to 434 (YVRSWRKAGP…PLSDCEEVLC (106 aa)). The ITIM motif signature appears at 369–374 (VVYSVV). Tyr-371 bears the Phosphotyrosine mark.

As to quaternary structure, interacts (tyrosine phosphorylated) with PTPN11. Interacts (tyrosine phosphorylated) with PTPN6, INPP5D, INPPL1 and GRB2. Interacts with class II MHC HLA-DR when the alpha chain is associated with a beta-1, beta-4 or a beta-5 but not a beta-3 chain. Post-translationally, phosphorylated on Tyr residues. Tyrosine phosphorylation induces association with phosphatase PTPN11, PTPN6, INPP5D, INPPL1 and GRB2. Expressed by cytolytic cells including NK cells, effector and effector-memory CD8(+) T-cells, and a subset of NKT cells (at protein level). Also expressed in gamma delta T cells and in a rare subset of effector CD4(+) T-cells (at protein level). Expressed in spleen, skin, peripheral blood leukocytes, liver, lung, bone marrow, small intestine and placenta. Expression among T-cells is greatly expanded in HIV-1 infected individuals, and includes not only effector and effector-memory CD8(+) T-cells but also populations of CD4(+) T-cells. Expression among CD8(+) T-cells and NK cells is expanded in individuals with chronic lymphocytic leukemia (CLL) but is reduced in PBMCs from patients with acute (AML), chronic myeloid leukemia (CML) and non-Hodgkin's lymphoma. Expression is higher in PBMCs and/or CD3(+) cells of patients with autoimmune diseases, such as rheumatoid arthritis (RA), systemic lupus erythematosus (SLE) and idiopathic thrombocytopenia purpura (ITP). In contrast, expression in CD3(+) cells from patients with lupus anticoagulans (LA) is higher.

It localises to the cell membrane. In terms of biological role, acts as a MHC class II receptor. When stimulated on its own, does not play a role in cytokine production or the release of cytotoxic granules by NK cells and cytotoxic CD8(+) T cells. Does not act as an Fc receptor. The protein is Fc receptor-like protein 6 (FCRL6) of Homo sapiens (Human).